The chain runs to 154 residues: uncharacterized protein (154 aa).

4 helical membrane-spanning segments follow: residues 15–37, 58–80, 95–116, and 123–145; these read DFSF…ALIT, FAAM…WLWG, LGAL…FAFT, and LVIS…FVPH.

The protein localises to the cell membrane. This is an uncharacterized protein from Archaeoglobus fulgidus (strain ATCC 49558 / DSM 4304 / JCM 9628 / NBRC 100126 / VC-16).